Consider the following 130-residue polypeptide: Sulfurtransferase TusD (130 aa).

The active-site Cysteine persulfide intermediate is Cys-78.

The protein belongs to the DsrE/TusD family. In terms of assembly, heterohexamer, formed by a dimer of trimers. The hexameric TusBCD complex contains 2 copies each of TusB, TusC and TusD. The TusBCD complex interacts with TusE.

It is found in the cytoplasm. Part of a sulfur-relay system required for 2-thiolation of 5-methylaminomethyl-2-thiouridine (mnm(5)s(2)U) at tRNA wobble positions. Accepts sulfur from TusA and transfers it in turn to TusE. This chain is Sulfurtransferase TusD, found in Buchnera aphidicola subsp. Baizongia pistaciae (strain Bp).